The sequence spans 263 residues: Endonuclease 8 (263 aa).

P2 acts as the Schiff-base intermediate with DNA in catalysis. The Proton donor role is filled by E3. The active-site Proton donor; for beta-elimination activity is K53. DNA-binding residues include Q70, R125, and N169. An FPG-type zinc finger spans residues K229–K263. The Proton donor; for delta-elimination activity role is filled by R253.

It belongs to the FPG family. Zn(2+) is required as a cofactor.

It carries out the reaction 2'-deoxyribonucleotide-(2'-deoxyribose 5'-phosphate)-2'-deoxyribonucleotide-DNA = a 3'-end 2'-deoxyribonucleotide-(2,3-dehydro-2,3-deoxyribose 5'-phosphate)-DNA + a 5'-end 5'-phospho-2'-deoxyribonucleoside-DNA + H(+). Involved in base excision repair of DNA damaged by oxidation or by mutagenic agents. Acts as a DNA glycosylase that recognizes and removes damaged bases. Has a preference for oxidized pyrimidines, such as thymine glycol, 5,6-dihydrouracil and 5,6-dihydrothymine. Has AP (apurinic/apyrimidinic) lyase activity and introduces nicks in the DNA strand. Cleaves the DNA backbone by beta-delta elimination to generate a single-strand break at the site of the removed base with both 3'- and 5'-phosphates. This is Endonuclease 8 from Salmonella schwarzengrund (strain CVM19633).